A 265-amino-acid polypeptide reads, in one-letter code: Glutamate racemase (265 aa).

Residues 12-13 and 44-45 contribute to the substrate site; these read DS and YG. Residue Cys75 is the Proton donor/acceptor of the active site. 76–77 contacts substrate; sequence NT. Cys186 (proton donor/acceptor) is an active-site residue. Residue 187-188 coordinates substrate; it reads TH.

It belongs to the aspartate/glutamate racemases family.

The catalysed reaction is L-glutamate = D-glutamate. Its pathway is cell wall biogenesis; peptidoglycan biosynthesis. Its function is as follows. Provides the (R)-glutamate required for cell wall biosynthesis. The polypeptide is Glutamate racemase (Pseudomonas entomophila (strain L48)).